The primary structure comprises 413 residues: uncharacterized protein (413 aa).

4 helical membrane passes run 22–42, 270–290, 312–332, and 379–399; these read VLLV…TLIL, IIYV…ISIC, ILIQ…GNLI, and LIII…YPIY.

This sequence belongs to the ABC-4 integral membrane protein family. LolC/E subfamily.

Its subcellular location is the cell membrane. This is an uncharacterized protein from Buchnera aphidicola subsp. Schizaphis graminum (strain Sg).